The following is a 225-amino-acid chain: Protein-L-isoaspartate O-methyltransferase (225 aa).

S-adenosyl-L-homocysteine-binding positions include 57–60 (ATVS), H65, S89, 110–111 (EH), 142–143 (DG), T216, and Q221. Residue S60 is part of the active site.

It belongs to the methyltransferase superfamily. L-isoaspartyl/D-aspartyl protein methyltransferase family. Monomer.

It localises to the cytoplasm. It is found in the cytosol. It catalyses the reaction [protein]-L-isoaspartate + S-adenosyl-L-methionine = [protein]-L-isoaspartate alpha-methyl ester + S-adenosyl-L-homocysteine. Functionally, initiates the repair of damaged proteins by catalyzing methyl esterification of L-isoaspartyl and D-aspartyl residues produced by spontaneous isomerization and racemization of L-aspartyl and L-asparaginyl residues in aging peptides and proteins. The polypeptide is Protein-L-isoaspartate O-methyltransferase (pcm-1) (Caenorhabditis elegans).